The chain runs to 396 residues: Gap junction gamma-1 protein (396 aa).

Topologically, residues 1–22 (MSWSFLTRLLEEIHNHSTFVGK) are cytoplasmic. The helical transmembrane segment at 23–45 (IWLTVLIVFRIVLTAVGGESIYY) threads the bilayer. Residues 46 to 75 (DEQSKFVCNTEQPGCENVCYDAFAPLSHVR) are Extracellular-facing. A helical membrane pass occupies residues 76–95 (FWVFQIILVATPSVMYLGYA). Residues 96 to 175 (IHKIAKMEHG…RRIREDGLMK (80 aa)) are Cytoplasmic-facing. Residues 145-165 (ELESDKENKEQSQPKPKHDGR) are disordered. Basic and acidic residues predominate over residues 147–156 (ESDKENKEQS). A helical transmembrane segment spans residues 176-198 (IYVLQLLARTVFEVGFLIGQYFL). Residues 199 to 228 (YGFQVHPFYVCSRLPCPHKIDCFISRPTEK) are Extracellular-facing. Residues 229 to 248 (TIFLLIMYGVTGLCLLLNIW) traverse the membrane as a helical segment. Residues 249–396 (EMLHLGFGTI…SGDGKTSVWI (148 aa)) are Cytoplasmic-facing. Residues 353–396 (VQAYSHQNNPHGPREKKAKVGSKAGSNKSTASSKSGDGKTSVWI) are disordered. Residues 376–387 (AGSNKSTASSKS) show a composition bias toward polar residues.

Belongs to the connexin family. Gamma-type subfamily. In terms of assembly, a connexon is composed of a hexamer of connexins. Interacts with CNST.

It localises to the cell membrane. Its subcellular location is the cell junction. The protein resides in the gap junction. Functionally, one gap junction consists of a cluster of closely packed pairs of transmembrane channels, the connexons, through which materials of low MW diffuse from one cell to a neighboring cell. The chain is Gap junction gamma-1 protein (GJC1) from Homo sapiens (Human).